The chain runs to 252 residues: Large ribosomal subunit protein uL4 (252 aa).

This sequence belongs to the universal ribosomal protein uL4 family. Part of the 50S ribosomal subunit.

Functionally, one of the primary rRNA binding proteins, this protein initially binds near the 5'-end of the 23S rRNA. It is important during the early stages of 50S assembly. It makes multiple contacts with different domains of the 23S rRNA in the assembled 50S subunit and ribosome. Its function is as follows. Forms part of the polypeptide exit tunnel. In Methanocaldococcus jannaschii (strain ATCC 43067 / DSM 2661 / JAL-1 / JCM 10045 / NBRC 100440) (Methanococcus jannaschii), this protein is Large ribosomal subunit protein uL4.